Consider the following 277-residue polypeptide: Bis(5'-nucleosyl)-tetraphosphatase, symmetrical (277 aa).

It belongs to the Ap4A hydrolase family.

It catalyses the reaction P(1),P(4)-bis(5'-adenosyl) tetraphosphate + H2O = 2 ADP + 2 H(+). Its function is as follows. Hydrolyzes diadenosine 5',5'''-P1,P4-tetraphosphate to yield ADP. The sequence is that of Bis(5'-nucleosyl)-tetraphosphatase, symmetrical from Azotobacter vinelandii (strain DJ / ATCC BAA-1303).